Reading from the N-terminus, the 55-residue chain is Large ribosomal subunit protein bL33 (55 aa).

Belongs to the bacterial ribosomal protein bL33 family.

The chain is Large ribosomal subunit protein bL33 from Micrococcus luteus (strain ATCC 4698 / DSM 20030 / JCM 1464 / CCM 169 / CCUG 5858 / IAM 1056 / NBRC 3333 / NCIMB 9278 / NCTC 2665 / VKM Ac-2230) (Micrococcus lysodeikticus).